The following is a 687-amino-acid chain: Ferric vulnibactin receptor VuuA (687 aa).

The first 37 residues, 1–37, serve as a signal peptide directing secretion; that stretch reads MAALRPARTSVAEKKTFKLHALSAVVMGLCASGQAYA. Residues 63–185 enclose the TBDR plug domain; it reads TIYDTSSSVQ…SAGAIVMKTN (123 aa). Positions 190-687 constitute a TBDR beta-barrel domain; it reads HFESAVKAGV…MIGASLQLNF (498 aa). Positions 670-687 match the TonB C-terminal box motif; it reads EPLKQQPRMIGASLQLNF.

The protein belongs to the TonB-dependent receptor family.

It is found in the cell outer membrane. Its function is as follows. Involved in the uptake of iron in complex with vulnibactin, a catecholate siderophore synthesized by V.vulnificus. Binds and transports ferric vulnibactin across the outer membrane. The energy source is provided by the inner membrane TonB system. The polypeptide is Ferric vulnibactin receptor VuuA (Vibrio vulnificus).